Consider the following 374-residue polypeptide: Putative glutamate--cysteine ligase 2 (374 aa).

It belongs to the glutamate--cysteine ligase type 2 family. YbdK subfamily.

The enzyme catalyses L-cysteine + L-glutamate + ATP = gamma-L-glutamyl-L-cysteine + ADP + phosphate + H(+). In terms of biological role, ATP-dependent carboxylate-amine ligase which exhibits weak glutamate--cysteine ligase activity. This Acidovorax sp. (strain JS42) protein is Putative glutamate--cysteine ligase 2.